The chain runs to 192 residues: Ion-translocating oxidoreductase complex subunit B (192 aa).

Residues 1 to 26 are hydrophobic; it reads MNAIWIAVAAVSLLGLAFGAILGYAS. The 4Fe-4S domain occupies 32 to 91; the sequence is EDDPVVEKIDEILPQSQCGQCGYPGCRPYAEAISCNGEKINRCAPGGEAVMLKIAELLNV. Residues Cys49, Cys52, Cys57, Cys74, Cys117, Cys120, Cys123, Cys127, Cys147, Cys150, Cys153, and Cys157 each contribute to the [4Fe-4S] cluster site. 2 consecutive 4Fe-4S ferredoxin-type domains span residues 108–137 and 138–167; these read MVAV…GATR and AMHT…LQPV.

Belongs to the 4Fe4S bacterial-type ferredoxin family. RnfB subfamily. The complex is composed of six subunits: RsxA, RsxB, RsxC, RsxD, RsxE and RsxG. It depends on [4Fe-4S] cluster as a cofactor.

The protein localises to the cell inner membrane. Its function is as follows. Part of a membrane-bound complex that couples electron transfer with translocation of ions across the membrane. Required to maintain the reduced state of SoxR. In Escherichia coli O127:H6 (strain E2348/69 / EPEC), this protein is Ion-translocating oxidoreductase complex subunit B.